The primary structure comprises 101 residues: NAD(P)H-quinone oxidoreductase subunit 4L, chloroplastic (101 aa).

3 helical membrane passes run 2 to 22 (ILEH…YGLI), 32 to 52 (MCLE…SDFF), and 61 to 81 (IFSI…LAIV).

This sequence belongs to the complex I subunit 4L family. In terms of assembly, NDH is composed of at least 16 different subunits, 5 of which are encoded in the nucleus.

The protein resides in the plastid. It is found in the chloroplast thylakoid membrane. The enzyme catalyses a plastoquinone + NADH + (n+1) H(+)(in) = a plastoquinol + NAD(+) + n H(+)(out). It carries out the reaction a plastoquinone + NADPH + (n+1) H(+)(in) = a plastoquinol + NADP(+) + n H(+)(out). NDH shuttles electrons from NAD(P)H:plastoquinone, via FMN and iron-sulfur (Fe-S) centers, to quinones in the photosynthetic chain and possibly in a chloroplast respiratory chain. The immediate electron acceptor for the enzyme in this species is believed to be plastoquinone. Couples the redox reaction to proton translocation, and thus conserves the redox energy in a proton gradient. In Eucalyptus globulus subsp. globulus (Tasmanian blue gum), this protein is NAD(P)H-quinone oxidoreductase subunit 4L, chloroplastic.